The sequence spans 231 residues: Androgen-dependent TFPI-regulating protein (231 aa).

Over 1-7 the chain is Cytoplasmic; the sequence is MTRTTTC. Residues 8 to 28 traverse the membrane as a helical segment; it reads VYHFLVWNWYIFLNYYIPLIG. The Extracellular segment spans residues 29-45; the sequence is KDDEKLKEFHDGGRSKY. A helical transmembrane segment spans residues 46–66; it reads LTLLNLLLQAIFFGVACLDDV. Residues 67 to 85 lie on the Cytoplasmic side of the membrane; it reads LKRIIGRKDIKFITSTRDL. The chain crosses the membrane as a helical span at residues 86–106; that stretch reads LFSTLVFPISTFIFLVFWTLF. Residues 107–123 are Extracellular-facing; sequence YYDRSLIYPKGLDDYFP. A helical transmembrane segment spans residues 124–144; it reads AWLNHAMHTYILLFVLVETIL. At 145 to 154 the chain is on the cytoplasmic side; the sequence is RPHHYPSKKL. The chain crosses the membrane as a helical span at residues 155-172; it reads GLALLGACNLAYITRVLW. Residues 173 to 190 lie on the Extracellular side of the membrane; it reads RYSQTGNWVYPVFASLNP. Residues 191-211 form a helical membrane-spanning segment; sequence LGIIIFFLVCYILNASIYLVG. Residues 212–231 are Cytoplasmic-facing; it reads EKINHWKWGATVKPLMKKKK.

The protein belongs to the AIG1 family. Highly expressed in flank organs and weakly in testis and earlobes.

The protein resides in the cell membrane. The catalysed reaction is 9-hexadecanoyloxy-octadecanoate + H2O = 9-hydroxy-octadecanoate + hexadecanoate + H(+). The enzyme catalyses 12-hexadecanoyloxy-octadecanoate + H2O = 12-hydroxyoctadecanoate + hexadecanoate + H(+). It catalyses the reaction 9-(9Z-hexadecenoyloxy)-octadecanoate + H2O = (9Z)-hexadecenoate + 9-hydroxy-octadecanoate + H(+). It carries out the reaction 12-(9Z-hexadecenoyloxy)-octadecanoate + H2O = 12-hydroxyoctadecanoate + (9Z)-hexadecenoate + H(+). The catalysed reaction is 13-(9Z-hexadecenoyloxy)-octadecanoate + H2O = 13-hydroxy-octadecanoate + (9Z)-hexadecenoate + H(+). The enzyme catalyses 9-octadecanoyloxy-octadecanoate + H2O = 9-hydroxy-octadecanoate + octadecanoate + H(+). It catalyses the reaction 12-octadecanoyloxy-octadecanoate + H2O = 12-hydroxyoctadecanoate + octadecanoate + H(+). It carries out the reaction 13-octadecanoyloxy-octadecanoate + H2O = 13-hydroxy-octadecanoate + octadecanoate + H(+). The catalysed reaction is 9-(9Z-octadecenoyloxy)-octadecanoate + H2O = 9-hydroxy-octadecanoate + (9Z)-octadecenoate + H(+). The enzyme catalyses 12-(9Z-octadecenoyloxy)-octadecanoate + H2O = 12-hydroxyoctadecanoate + (9Z)-octadecenoate + H(+). It catalyses the reaction 13-(9Z-octadecenoyloxy)-octadecanoate + H2O = 13-hydroxy-octadecanoate + (9Z)-octadecenoate + H(+). It carries out the reaction 5-(9Z-octadecenoyloxy)-octadecanoate + H2O = 5-hydroxy-octadecanoate + (9Z)-octadecenoate + H(+). Hydrolyzes bioactive fatty-acid esters of hydroxy-fatty acids (FAHFAs), but not other major classes of lipids. Shows a preference for FAHFAs with branching distal from the carboxylate head group of the lipids. Regulates the expression and the cell-associated anticoagulant activity of the inhibitor TFPI in endothelial cells (in vitro). In Mesocricetus auratus (Golden hamster), this protein is Androgen-dependent TFPI-regulating protein (ADTRP).